A 400-amino-acid polypeptide reads, in one-letter code: Formate-dependent phosphoribosylglycinamide formyltransferase (400 aa).

Residues 22-23 (EL) and Glu-82 each bind N(1)-(5-phospho-beta-D-ribosyl)glycinamide. ATP contacts are provided by residues Arg-115, Lys-157, 162 to 167 (SSGKGQ), 197 to 200 (EGFI), and Glu-205. In terms of domain architecture, ATP-grasp spans 120-315 (RLAAETLGVP…EFELHARAIL (196 aa)). Mg(2+) is bound by residues Glu-274 and Glu-286. Residues Asp-293, Lys-362, and 369-370 (RR) each bind N(1)-(5-phospho-beta-D-ribosyl)glycinamide.

It belongs to the PurK/PurT family. Homodimer.

The catalysed reaction is N(1)-(5-phospho-beta-D-ribosyl)glycinamide + formate + ATP = N(2)-formyl-N(1)-(5-phospho-beta-D-ribosyl)glycinamide + ADP + phosphate + H(+). It participates in purine metabolism; IMP biosynthesis via de novo pathway; N(2)-formyl-N(1)-(5-phospho-D-ribosyl)glycinamide from N(1)-(5-phospho-D-ribosyl)glycinamide (formate route): step 1/1. In terms of biological role, involved in the de novo purine biosynthesis. Catalyzes the transfer of formate to 5-phospho-ribosyl-glycinamide (GAR), producing 5-phospho-ribosyl-N-formylglycinamide (FGAR). Formate is provided by PurU via hydrolysis of 10-formyl-tetrahydrofolate. The chain is Formate-dependent phosphoribosylglycinamide formyltransferase from Variovorax paradoxus (strain S110).